Consider the following 663-residue polypeptide: Methionine--tRNA ligase (663 aa).

The 'HIGH' region motif lies at 10–20 (AYTNGPLHLGH). The Zn(2+) site is built by C142, C145, C154, and C157. The 'KMSKS' region signature appears at 323 to 327 (KMSTS). T326 is a binding site for ATP. A tRNA-binding domain is found at 563–663 (YFGNIDLRVG…RDLPVGSKIH (101 aa)).

Belongs to the class-I aminoacyl-tRNA synthetase family. MetG type 1 subfamily. In terms of assembly, homodimer. Zn(2+) is required as a cofactor.

It localises to the cytoplasm. It catalyses the reaction tRNA(Met) + L-methionine + ATP = L-methionyl-tRNA(Met) + AMP + diphosphate. In terms of biological role, is required not only for elongation of protein synthesis but also for the initiation of all mRNA translation through initiator tRNA(fMet) aminoacylation. This is Methionine--tRNA ligase from Methanococcus maripaludis (strain C5 / ATCC BAA-1333).